The sequence spans 369 residues: Queuine tRNA-ribosyltransferase (369 aa).

Asp-89 acts as the Proton acceptor in catalysis. Residues 89-93 (DSGGF), Asp-142, Gln-184, and Gly-211 each bind substrate. The tract at residues 242 to 248 (GGGSPEL) is RNA binding. The active-site Nucleophile is Asp-261. An RNA binding; important for wobble base 34 recognition region spans residues 266 to 270 (TRIAR). Positions 299, 301, 304, and 330 each coordinate Zn(2+).

Belongs to the queuine tRNA-ribosyltransferase family. As to quaternary structure, homodimer. Within each dimer, one monomer is responsible for RNA recognition and catalysis, while the other monomer binds to the replacement base PreQ1. The cofactor is Zn(2+).

It carries out the reaction 7-aminomethyl-7-carbaguanine + guanosine(34) in tRNA = 7-aminomethyl-7-carbaguanosine(34) in tRNA + guanine. Its pathway is tRNA modification; tRNA-queuosine biosynthesis. In terms of biological role, catalyzes the base-exchange of a guanine (G) residue with the queuine precursor 7-aminomethyl-7-deazaguanine (PreQ1) at position 34 (anticodon wobble position) in tRNAs with GU(N) anticodons (tRNA-Asp, -Asn, -His and -Tyr). Catalysis occurs through a double-displacement mechanism. The nucleophile active site attacks the C1' of nucleotide 34 to detach the guanine base from the RNA, forming a covalent enzyme-RNA intermediate. The proton acceptor active site deprotonates the incoming PreQ1, allowing a nucleophilic attack on the C1' of the ribose to form the product. After dissociation, two additional enzymatic reactions on the tRNA convert PreQ1 to queuine (Q), resulting in the hypermodified nucleoside queuosine (7-(((4,5-cis-dihydroxy-2-cyclopenten-1-yl)amino)methyl)-7-deazaguanosine). The polypeptide is Queuine tRNA-ribosyltransferase (Thermotoga neapolitana (strain ATCC 49049 / DSM 4359 / NBRC 107923 / NS-E)).